We begin with the raw amino-acid sequence, 315 residues long: Jacalin-related lectin 10 (315 aa).

Residues 1–23 (MVIIYIFLFLSSAIIDSTGLAKA) form the signal peptide. Jacalin-type lectin domains follow at residues 24–165 (QKLD…YLTT) and 168–312 (PTKS…YFSP).

This sequence belongs to the jacalin lectin family.

This Arabidopsis thaliana (Mouse-ear cress) protein is Jacalin-related lectin 10 (JAL10).